The chain runs to 192 residues: Ion-translocating oxidoreductase complex subunit A (192 aa).

Transmembrane regions (helical) follow at residues 5–25 (VLLL…FLGL), 39–59 (IGMG…AYLV), 67–87 (LGIE…VVQF), 102–122 (LLGI…VALL), 134–154 (IIYG…FASM), and 171–191 (SIAM…TGLV).

It belongs to the NqrDE/RnfAE family. The complex is composed of six subunits: RnfA, RnfB, RnfC, RnfD, RnfE and RnfG.

It localises to the cell inner membrane. Functionally, part of a membrane-bound complex that couples electron transfer with translocation of ions across the membrane. This Vibrio parahaemolyticus serotype O3:K6 (strain RIMD 2210633) protein is Ion-translocating oxidoreductase complex subunit A.